A 426-amino-acid polypeptide reads, in one-letter code: MESLTLQPISKINGQINLPGSKSVSNRALLLAALASGTTKLTNLLDSDDIRHMLNALKALGVEYKLSANKTECEVTGLGRAFEPNEALELFLGNAGTAMRPLAAALCLGQGEFVLTGEPRMKERPIGHLVTALKAAGADVEYLENENYPPLKIKGTGLHGGTVEIDGSISSQFLTAFLMAAPLSTQETTIKIVGDLVSKPYIDITLDIMATFGVKIENQNYQTFVVPANQTYVAPGDFLVEGDASSASYFLAAAAIKGGEVKVTGIGKKSIQGDVQFADALAAMGTEIEWGDDYVIARKGELNAIDMDFNHIPDAAMTIATAALFAKGTTSIRNVYNWRVKETDRLAAMATELRKVGAVVEEGEDYITITPPASLQHASIDTYDDHRMAMCFSLVALSDTPVTINDPGCTSKTFPDYFDKLKELSC.

3-phosphoshikimate is bound by residues lysine 22, serine 23, and arginine 27. A phosphoenolpyruvate-binding site is contributed by lysine 22. Phosphoenolpyruvate contacts are provided by glycine 96 and arginine 124. Residues serine 170, serine 171, glutamine 172, serine 198, aspartate 314, asparagine 337, and lysine 341 each contribute to the 3-phosphoshikimate site. Glutamine 172 is a phosphoenolpyruvate binding site. Catalysis depends on aspartate 314, which acts as the Proton acceptor. Phosphoenolpyruvate is bound by residues arginine 345, arginine 387, and lysine 412.

It belongs to the EPSP synthase family. As to quaternary structure, monomer.

It localises to the cytoplasm. The catalysed reaction is 3-phosphoshikimate + phosphoenolpyruvate = 5-O-(1-carboxyvinyl)-3-phosphoshikimate + phosphate. It functions in the pathway metabolic intermediate biosynthesis; chorismate biosynthesis; chorismate from D-erythrose 4-phosphate and phosphoenolpyruvate: step 6/7. Catalyzes the transfer of the enolpyruvyl moiety of phosphoenolpyruvate (PEP) to the 5-hydroxyl of shikimate-3-phosphate (S3P) to produce enolpyruvyl shikimate-3-phosphate and inorganic phosphate. This Aliivibrio fischeri (strain ATCC 700601 / ES114) (Vibrio fischeri) protein is 3-phosphoshikimate 1-carboxyvinyltransferase.